Reading from the N-terminus, the 255-residue chain is MGKKILVQRAGRGGSQFRSPSWRRIAPLRYVQFSEEQLKTTIRGIIKELVHVTGLNAPAMHVVLENGEEMYLPAVEGVYVGKIIEFGPDAKVEPGNVMPIGKIPEGTMVCNIEKRVGDGGKYARSSGTYGVVMIHRDSTTLVQLPSGRMIEVDSRARATIGIVAGGGRIEKPFVKAGNKYHRARTKAWKYPKVRGKAMSAYAHPHGGGSHQQGGTPVKKNAPPGQKVGFYGSKCTGRGCVRWRAQQAKTQQRQQA.

Positions tyrosine 201 to phenylalanine 229 are disordered.

It belongs to the universal ribosomal protein uL2 family. As to quaternary structure, part of the 50S ribosomal subunit. Forms a bridge to the 30S subunit in the 70S ribosome.

In terms of biological role, one of the primary rRNA binding proteins. Required for association of the 30S and 50S subunits to form the 70S ribosome, for tRNA binding and peptide bond formation. It has been suggested to have peptidyltransferase activity; this is somewhat controversial. Makes several contacts with the 16S rRNA in the 70S ribosome. The protein is Large ribosomal subunit protein uL2 of Caldivirga maquilingensis (strain ATCC 700844 / DSM 13496 / JCM 10307 / IC-167).